Consider the following 297-residue polypeptide: Carbamate kinase (297 aa).

The protein belongs to the carbamate kinase family.

It is found in the cytoplasm. The enzyme catalyses hydrogencarbonate + NH4(+) + ATP = carbamoyl phosphate + ADP + H2O + H(+). It catalyses the reaction carbamate + ATP = carbamoyl phosphate + ADP. The catalysed reaction is hydrogencarbonate + NH4(+) = carbamate + H2O + H(+). It participates in nitrogen metabolism; (S)-allantoin degradation. In terms of biological role, kinase involved in the anaerobic nitrogen utilization via the assimilation of allantoin. Catalyzes the transfer of a phosphate group from carbamoyl phosphate to ADP to produce ATP and leave carbamate, which spontaneously hydrolyzes to ammonia and hydrogencarbonate. The chain is Carbamate kinase from Escherichia coli (strain K12).